The primary structure comprises 96 residues: Small ribosomal subunit protein bS18 (96 aa).

A compositionally biased stretch (basic and acidic residues) spans M1–K22. Residues M1 to P25 form a disordered region.

It belongs to the bacterial ribosomal protein bS18 family. Part of the 30S ribosomal subunit. Forms a tight heterodimer with protein bS6.

In terms of biological role, binds as a heterodimer with protein bS6 to the central domain of the 16S rRNA, where it helps stabilize the platform of the 30S subunit. In Borrelia hermsii (strain HS1 / DAH), this protein is Small ribosomal subunit protein bS18.